A 309-amino-acid chain; its full sequence is Uricase-2 isozyme 1 (309 aa).

Catalysis depends on charge relay system residues Lys-18 and Thr-64. Residues Thr-64, Asp-65, Phe-166, Arg-183, Val-238, Gln-239, and Asn-265 each coordinate urate. The active-site Charge relay system is the His-267. The short motif at 307-309 (SKL) is the Microbody targeting signal element.

The protein belongs to the uricase family. In terms of assembly, homotetramer. In terms of processing, the N-terminus is blocked. Expressed predominantly in the uninfected cells of the central tissue of the root nodule.

Its subcellular location is the peroxisome. It catalyses the reaction urate + O2 + H2O = 5-hydroxyisourate + H2O2. The protein operates within purine metabolism; urate degradation; (S)-allantoin from urate: step 1/3. In terms of biological role, catalyzes the oxidation of uric acid to 5-hydroxyisourate, which is further processed to form (S)-allantoin. This Glycine max (Soybean) protein is Uricase-2 isozyme 1.